A 323-amino-acid chain; its full sequence is Coiled-coil domain-containing protein 160 (323 aa).

The disordered stretch occupies residues 1 to 81 (MDARRKHWKD…EGEQDSNLRE (81 aa)). Positions 48–58 (SNFSVRNTQEG) are enriched in polar residues. Residues 144–289 (LRLHLLNEEL…IKNELRVEKT (146 aa)) are a coiled coil.

Belongs to the CCDC160 family.

The protein is Coiled-coil domain-containing protein 160 (Ccdc160) of Mus musculus (Mouse).